The chain runs to 284 residues: MEVGLNEFLDMKKRYEDFKMKNKREPRYVTTKNGYKVMLPVFKDMLRRYEDFVRINGREPNYISIQPQPNGKIEIKKFRDMLRRYEDFVRINGREPNIIYLEQGKSDHVSLGTFKDMLRRYKDFVRINGREPNYISIQPQPSLKGHWTTKVIEKIGTFHDATSLYERVKKTCKYKYYYNDQVPNHVAVMRMTTSGINCTDACQLFSKVLEEMGYEVKIEHVRVKCNDGKWYGHYLLRVGGFELKDGTIWDYVSATKTGRPLGVPCCTAGFQHLGWGIVGPVYDK.

Pseudomurein-binding repeat regions lie at residues 4–31, 34–65, 70–100, and 106–137; these read GLNEFLDMKKRYEDFKMKNKREPRYVTT, GYKVMLPVFKDMLRRYEDFVRINGREPNYISI, NGKIEIKKFRDMLRRYEDFVRINGREPNIIY, and SDHVSLGTFKDMLRRYKDFVRINGREPNYISI. Active-site residues include C198, H233, and D250.

This sequence belongs to the Psimunavirus Pseudomurein endoisopeptidase family. As to quaternary structure, monomer. Ca(2+) serves as cofactor. Mg(2+) is required as a cofactor.

Its function is as follows. Cysteine protease that cleaves the cell wall of its host methanogen under hydrogen limitation of the latter (autolysis). Cleaves the epsilon-Ala-Lys isopeptide bond in the oligopeptides of pseudomurein. The chain is Pseudomurein endoisopeptidase PeiW (peiW) from Methanothermobacter phage psiM100.